Here is a 309-residue protein sequence, read N- to C-terminus: Curved DNA-binding protein (309 aa).

In terms of domain architecture, J spans 5–69; it reads DYYAILGVKP…ERRAEYDQLR (65 aa).

The protein localises to the cytoplasm. It localises to the nucleoid. Its function is as follows. DNA-binding protein that preferentially recognizes a curved DNA sequence. It is probably a functional analog of DnaJ; displays overlapping activities with DnaJ, but functions under different conditions, probably acting as a molecular chaperone in an adaptive response to environmental stresses other than heat shock. Lacks autonomous chaperone activity; binds native substrates and targets them for recognition by DnaK. Its activity is inhibited by the binding of CbpM. This Serratia proteamaculans (strain 568) protein is Curved DNA-binding protein.